A 961-amino-acid chain; its full sequence is Outer capsid protein VP2 (961 aa).

It belongs to the orbivirus VP2 family.

The protein resides in the virion. In terms of biological role, the VP2 protein is one of the two proteins (with VP5) target of the host immunogenic response. Responsible for viral which constitute the virus particle outer capsid. It is the major attachment to target host cell, probably by binding to sialic acid. This attachment induces virion internalization predominantly through clathrin-dependent endocytosis. This is Outer capsid protein VP2 (Segment-2) from Bluetongue virus 1 (isolate South Africa) (BTV 1).